We begin with the raw amino-acid sequence, 416 residues long: UDP-N-acetylglucosamine 1-carboxyvinyltransferase (416 aa).

Position 22–23 (22–23 (KN)) interacts with phosphoenolpyruvate. Arg92 contacts UDP-N-acetyl-alpha-D-glucosamine. Catalysis depends on Cys116, which acts as the Proton donor. Cys116 is subject to 2-(S-cysteinyl)pyruvic acid O-phosphothioketal. UDP-N-acetyl-alpha-D-glucosamine-binding positions include 121-125 (RPVDQ), Asp304, and Ile326.

The protein belongs to the EPSP synthase family. MurA subfamily.

It is found in the cytoplasm. It carries out the reaction phosphoenolpyruvate + UDP-N-acetyl-alpha-D-glucosamine = UDP-N-acetyl-3-O-(1-carboxyvinyl)-alpha-D-glucosamine + phosphate. It functions in the pathway cell wall biogenesis; peptidoglycan biosynthesis. Its function is as follows. Cell wall formation. Adds enolpyruvyl to UDP-N-acetylglucosamine. The sequence is that of UDP-N-acetylglucosamine 1-carboxyvinyltransferase from Cupriavidus taiwanensis (strain DSM 17343 / BCRC 17206 / CCUG 44338 / CIP 107171 / LMG 19424 / R1) (Ralstonia taiwanensis (strain LMG 19424)).